The primary structure comprises 325 residues: NADH-quinone oxidoreductase subunit H (325 aa).

A run of 9 helical transmembrane segments spans residues 11-31 (ILLT…CGAF), 50-69 (SRVG…KMFF), 81-101 (LIFT…FAIV), 114-134 (IGIL…LFAG), 154-174 (LSYE…AGSF), 186-206 (LWNI…GVAV), 237-257 (FFVG…TLFF), 265-285 (LPPF…FILV), and 304-324 (ICLP…LYHA).

This sequence belongs to the complex I subunit 1 family. As to quaternary structure, NDH-1 is composed of 13 different subunits. Subunits NuoA, H, J, K, L, M, N constitute the membrane sector of the complex.

Its subcellular location is the cell inner membrane. It carries out the reaction a quinone + NADH + 5 H(+)(in) = a quinol + NAD(+) + 4 H(+)(out). Its function is as follows. NDH-1 shuttles electrons from NADH, via FMN and iron-sulfur (Fe-S) centers, to quinones in the respiratory chain. The immediate electron acceptor for the enzyme in this species is believed to be ubiquinone. Couples the redox reaction to proton translocation (for every two electrons transferred, four hydrogen ions are translocated across the cytoplasmic membrane), and thus conserves the redox energy in a proton gradient. This subunit may bind ubiquinone. The chain is NADH-quinone oxidoreductase subunit H from Edwardsiella ictaluri (strain 93-146).